The following is a 177-amino-acid chain: Peptidyl-tRNA hydrolase 1 (177 aa).

A tRNA-binding site is contributed by tyrosine 18. Catalysis depends on histidine 23, which acts as the Proton acceptor. Residues phenylalanine 65, asparagine 67, and asparagine 113 each contribute to the tRNA site.

The protein belongs to the PTH family. In terms of assembly, monomer.

The protein localises to the cytoplasm. It catalyses the reaction an N-acyl-L-alpha-aminoacyl-tRNA + H2O = an N-acyl-L-amino acid + a tRNA + H(+). Hydrolyzes ribosome-free peptidyl-tRNAs (with 1 or more amino acids incorporated), which drop off the ribosome during protein synthesis, or as a result of ribosome stalling. In terms of biological role, catalyzes the release of premature peptidyl moieties from peptidyl-tRNA molecules trapped in stalled 50S ribosomal subunits, and thus maintains levels of free tRNAs and 50S ribosomes. This is Peptidyl-tRNA hydrolase 1 from Corynebacterium glutamicum (strain ATCC 13032 / DSM 20300 / JCM 1318 / BCRC 11384 / CCUG 27702 / LMG 3730 / NBRC 12168 / NCIMB 10025 / NRRL B-2784 / 534).